The sequence spans 239 residues: Octanoyltransferase (239 aa).

The 181-residue stretch at 59–239 folds into the BPL/LPL catalytic domain; it reads PFSPQAVWLL…KRRFKLNWEK (181 aa). Substrate is bound by residues 101-108, 168-170, and 181-183; these read RGGEVTHH, SIG, and GFS. Cys-199 serves as the catalytic Acyl-thioester intermediate.

The protein belongs to the LipB family.

The protein localises to the cytoplasm. The catalysed reaction is octanoyl-[ACP] + L-lysyl-[protein] = N(6)-octanoyl-L-lysyl-[protein] + holo-[ACP] + H(+). The protein operates within protein modification; protein lipoylation via endogenous pathway; protein N(6)-(lipoyl)lysine from octanoyl-[acyl-carrier-protein]: step 1/2. Its function is as follows. Catalyzes the transfer of endogenously produced octanoic acid from octanoyl-acyl-carrier-protein onto the lipoyl domains of lipoate-dependent enzymes. Lipoyl-ACP can also act as a substrate although octanoyl-ACP is likely to be the physiological substrate. This Prochlorococcus marinus (strain NATL2A) protein is Octanoyltransferase.